Reading from the N-terminus, the 166-residue chain is Crossover junction endodeoxyribonuclease RuvC (166 aa).

Catalysis depends on residues Asp11, Glu70, and Asp142. Asp11, Glu70, and Asp142 together coordinate Mg(2+).

The protein belongs to the RuvC family. Homodimer which binds Holliday junction (HJ) DNA. The HJ becomes 2-fold symmetrical on binding to RuvC with unstacked arms; it has a different conformation from HJ DNA in complex with RuvA. In the full resolvosome a probable DNA-RuvA(4)-RuvB(12)-RuvC(2) complex forms which resolves the HJ. It depends on Mg(2+) as a cofactor.

Its subcellular location is the cytoplasm. It carries out the reaction Endonucleolytic cleavage at a junction such as a reciprocal single-stranded crossover between two homologous DNA duplexes (Holliday junction).. The RuvA-RuvB-RuvC complex processes Holliday junction (HJ) DNA during genetic recombination and DNA repair. Endonuclease that resolves HJ intermediates. Cleaves cruciform DNA by making single-stranded nicks across the HJ at symmetrical positions within the homologous arms, yielding a 5'-phosphate and a 3'-hydroxyl group; requires a central core of homology in the junction. The consensus cleavage sequence is 5'-(A/T)TT(C/G)-3'. Cleavage occurs on the 3'-side of the TT dinucleotide at the point of strand exchange. HJ branch migration catalyzed by RuvA-RuvB allows RuvC to scan DNA until it finds its consensus sequence, where it cleaves and resolves the cruciform DNA. The polypeptide is Crossover junction endodeoxyribonuclease RuvC (Nitratidesulfovibrio vulgaris (strain DP4) (Desulfovibrio vulgaris)).